We begin with the raw amino-acid sequence, 788 residues long: Patatin-like phospholipase domain-containing protein DEHA2B04136g (788 aa).

Residues 136–156 (WPILIFISCWISLLCFMYIIV) traverse the membrane as a helical segment. Residues 311 to 503 (LCLSGGACFT…RTDIPIDALN (193 aa)) form the PNPLA domain. The GXSXG signature appears at 342–346 (GTSGG). Ser344 acts as the Nucleophile in catalysis. Asp490 serves as the catalytic Proton acceptor. Residues 662 to 672 (ANFNTLTSSDS) are compositionally biased toward polar residues. Residues 662 to 771 (ANFNTLTSSD…DTGSRFLKSF (110 aa)) form a disordered region. Composition is skewed to acidic residues over residues 690–705 (MFDD…DDEV) and 723–749 (EDGD…DEAN).

This sequence belongs to the PLPL family.

It localises to the membrane. Probable lipid hydrolase. This chain is Patatin-like phospholipase domain-containing protein DEHA2B04136g, found in Debaryomyces hansenii (strain ATCC 36239 / CBS 767 / BCRC 21394 / JCM 1990 / NBRC 0083 / IGC 2968) (Yeast).